Here is a 502-residue protein sequence, read N- to C-terminus: UDP-N-acetylmuramate--L-alanine ligase (502 aa).

120 to 126 (GTHGKTS) provides a ligand contact to ATP.

This sequence belongs to the MurCDEF family.

It is found in the cytoplasm. It catalyses the reaction UDP-N-acetyl-alpha-D-muramate + L-alanine + ATP = UDP-N-acetyl-alpha-D-muramoyl-L-alanine + ADP + phosphate + H(+). The protein operates within cell wall biogenesis; peptidoglycan biosynthesis. Its function is as follows. Cell wall formation. The polypeptide is UDP-N-acetylmuramate--L-alanine ligase (Rhodococcus erythropolis (strain PR4 / NBRC 100887)).